Consider the following 264-residue polypeptide: 2-hydroxyhexa-2,4-dienoate hydratase (264 aa).

Belongs to the hydratase/decarboxylase family.

The catalysed reaction is (2Z,4Z)-2-hydroxyhexa-2,4-dienoate + H2O = 4-hydroxy-2-oxohexanoate. In terms of biological role, involved in the catatabolism of testosterone. Catalyzes the hydration of 2-hydroxyhexa-2,4-dienoic acid to 4-hydroxy-2-oxohexanoic acid. The chain is 2-hydroxyhexa-2,4-dienoate hydratase (tesE) from Comamonas testosteroni (Pseudomonas testosteroni).